The following is a 270-amino-acid chain: uncharacterized protein (270 aa).

The first 22 residues, 1–22, serve as a signal peptide directing secretion; it reads MEYIKKIALYMSVLLLIIFIGG. Residue Cys23 is the site of N-palmitoyl cysteine attachment. Residue Cys23 is the site of S-diacylglycerol cysteine attachment.

The protein belongs to the staphylococcal tandem lipoprotein family.

The protein localises to the cell membrane. This is an uncharacterized protein from Staphylococcus aureus (strain NCTC 8325 / PS 47).